A 1388-amino-acid chain; its full sequence is DNA-directed RNA polymerase subunit beta' (1388 aa).

Residues Cys76, Cys78, Cys91, and Cys94 each coordinate Zn(2+). Positions 467, 469, and 471 each coordinate Mg(2+). Zn(2+)-binding residues include Cys810, Cys884, Cys891, and Cys894.

The protein belongs to the RNA polymerase beta' chain family. As to quaternary structure, the RNAP catalytic core consists of 2 alpha, 1 beta, 1 beta' and 1 omega subunit. When a sigma factor is associated with the core the holoenzyme is formed, which can initiate transcription. Mg(2+) is required as a cofactor. The cofactor is Zn(2+).

It catalyses the reaction RNA(n) + a ribonucleoside 5'-triphosphate = RNA(n+1) + diphosphate. DNA-dependent RNA polymerase catalyzes the transcription of DNA into RNA using the four ribonucleoside triphosphates as substrates. The chain is DNA-directed RNA polymerase subunit beta' from Lawsonia intracellularis (strain PHE/MN1-00).